The chain runs to 467 residues: Asparagine--tRNA ligase (467 aa).

The protein belongs to the class-II aminoacyl-tRNA synthetase family. Homodimer.

The protein resides in the cytoplasm. The catalysed reaction is tRNA(Asn) + L-asparagine + ATP = L-asparaginyl-tRNA(Asn) + AMP + diphosphate + H(+). The sequence is that of Asparagine--tRNA ligase from Phocaeicola vulgatus (strain ATCC 8482 / DSM 1447 / JCM 5826 / CCUG 4940 / NBRC 14291 / NCTC 11154) (Bacteroides vulgatus).